A 293-amino-acid polypeptide reads, in one-letter code: Phosphatidylserine decarboxylase proenzyme (293 aa).

Active-site charge relay system; for autoendoproteolytic cleavage activity residues include D88, H144, and S247. S247 functions as the Schiff-base intermediate with substrate; via pyruvic acid; for decarboxylase activity in the catalytic mechanism. Pyruvic acid (Ser); by autocatalysis is present on S247.

This sequence belongs to the phosphatidylserine decarboxylase family. PSD-B subfamily. Prokaryotic type I sub-subfamily. Heterodimer of a large membrane-associated beta subunit and a small pyruvoyl-containing alpha subunit. The cofactor is pyruvate. In terms of processing, is synthesized initially as an inactive proenzyme. Formation of the active enzyme involves a self-maturation process in which the active site pyruvoyl group is generated from an internal serine residue via an autocatalytic post-translational modification. Two non-identical subunits are generated from the proenzyme in this reaction, and the pyruvate is formed at the N-terminus of the alpha chain, which is derived from the carboxyl end of the proenzyme. The autoendoproteolytic cleavage occurs by a canonical serine protease mechanism, in which the side chain hydroxyl group of the serine supplies its oxygen atom to form the C-terminus of the beta chain, while the remainder of the serine residue undergoes an oxidative deamination to produce ammonia and the pyruvoyl prosthetic group on the alpha chain. During this reaction, the Ser that is part of the protease active site of the proenzyme becomes the pyruvoyl prosthetic group, which constitutes an essential element of the active site of the mature decarboxylase.

The protein resides in the cell membrane. It carries out the reaction a 1,2-diacyl-sn-glycero-3-phospho-L-serine + H(+) = a 1,2-diacyl-sn-glycero-3-phosphoethanolamine + CO2. It participates in phospholipid metabolism; phosphatidylethanolamine biosynthesis; phosphatidylethanolamine from CDP-diacylglycerol: step 2/2. Its function is as follows. Catalyzes the formation of phosphatidylethanolamine (PtdEtn) from phosphatidylserine (PtdSer). The sequence is that of Phosphatidylserine decarboxylase proenzyme from Xylella fastidiosa (strain M12).